The following is a 180-amino-acid chain: WPP domain-containing protein 2 (180 aa).

Low complexity predominate over residues Met-1–Ser-26. 2 disordered regions span residues Met-1–Trp-61 and Ser-140–Ala-180. Polar residues predominate over residues Ala-27–Ala-36. Over residues Ala-37 to Pro-53 the composition is skewed to basic and acidic residues. Residues Thr-44 to Ala-147 are WPP. A Phosphoserine modification is found at Ser-173.

Binds to FPP proteins. Interacts with WAP, WIP1, WIP2 and WIP3 through its WPP domain. Interacts with WIT1 and HSP70-1. Expressed in roots, stems, leaves and flowers.

The protein resides in the nucleus envelope. It localises to the cytoplasm. It is found in the nucleus. The protein localises to the golgi apparatus. In terms of biological role, regulates the mitotic activity in roots. Plays a role with HSP70-1 in facilitating WIT1 nuclear envelope targeting. This chain is WPP domain-containing protein 2 (WPP2), found in Arabidopsis thaliana (Mouse-ear cress).